The sequence spans 293 residues: Neugrin (293 aa).

The first 18 residues, 1 to 18, serve as a signal peptide directing secretion; that stretch reads MALSLSLFLGGRVRTSLA. The residue at position 41 (serine 41) is a Phosphoserine. Disordered regions lie at residues 177–210 and 224–254; these read DEVSSKSQNHSTALKVAKSHPHSTDAQKKREGRD and TTALGHQRELQKSATSDSEATGRAGSDTLPS. N-linked (GlcNAc...) asparagine glycosylation occurs at asparagine 185. The segment covering 198-210 has biased composition (basic and acidic residues); it reads HSTDAQKKREGRD.

This sequence belongs to the neugrin family. Forms a regulatory protein-RNA complex, consisting of RCC1L, NGRN, RPUSD3, RPUSD4, TRUB2, FASTKD2 and 16S mt-rRNA. Interacts with 16S mt-rRNA; this interaction is direct. In terms of tissue distribution, expressed in heart, brain, liver and kidney. In brain, mainly expressed in neurons rather than glial cells.

It is found in the nucleus. The protein resides in the secreted. Its subcellular location is the mitochondrion membrane. In terms of biological role, plays an essential role in mitochondrial ribosome biogenesis. As a component of a functional protein-RNA module, consisting of RCC1L, NGRN, RPUSD3, RPUSD4, TRUB2, FASTKD2 and 16S mitochondrial ribosomal RNA (16S mt-rRNA), controls 16S mt-rRNA abundance and is required for intra-mitochondrial translation of core subunits of the oxidative phosphorylation system. The polypeptide is Neugrin (Ngrn) (Mus musculus (Mouse)).